A 286-amino-acid polypeptide reads, in one-letter code: Ribose-phosphate pyrophosphokinase (286 aa).

ATP is bound by residues 34–36 (DGE) and 91–93 (RQH). 2 residues coordinate Mg(2+): H124 and D161. K184 is an active-site residue. Residues R186, D210, and 214–218 (STGGT) contribute to the D-ribose 5-phosphate site.

It belongs to the ribose-phosphate pyrophosphokinase family. Class III (archaeal) subfamily. As to quaternary structure, homodimer. It depends on Mg(2+) as a cofactor.

It is found in the cytoplasm. The enzyme catalyses D-ribose 5-phosphate + ATP = 5-phospho-alpha-D-ribose 1-diphosphate + AMP + H(+). It functions in the pathway metabolic intermediate biosynthesis; 5-phospho-alpha-D-ribose 1-diphosphate biosynthesis; 5-phospho-alpha-D-ribose 1-diphosphate from D-ribose 5-phosphate (route I): step 1/1. Its function is as follows. Involved in the biosynthesis of the central metabolite phospho-alpha-D-ribosyl-1-pyrophosphate (PRPP) via the transfer of pyrophosphoryl group from ATP to 1-hydroxyl of ribose-5-phosphate (Rib-5-P). The chain is Ribose-phosphate pyrophosphokinase from Thermoplasma volcanium (strain ATCC 51530 / DSM 4299 / JCM 9571 / NBRC 15438 / GSS1).